Consider the following 100-residue polypeptide: Putative membrane protein insertion efficiency factor (100 aa).

It belongs to the UPF0161 family.

Its subcellular location is the cell membrane. Its function is as follows. Could be involved in insertion of integral membrane proteins into the membrane. The sequence is that of Putative membrane protein insertion efficiency factor from Enterococcus faecalis (strain ATCC 700802 / V583).